A 290-amino-acid polypeptide reads, in one-letter code: 4-hydroxybenzoate octaprenyltransferase (290 aa).

A run of 8 helical transmembrane segments spans residues isoleucine 24–isoleucine 44, valine 48–asparagine 68, leucine 98–isoleucine 118, phenylalanine 142–isoleucine 162, tryptophan 171–isoleucine 191, phenylalanine 214–glutamate 234, valine 239–isoleucine 259, and alanine 270–histidine 290.

It belongs to the UbiA prenyltransferase family. Mg(2+) is required as a cofactor.

The protein localises to the cell inner membrane. The catalysed reaction is all-trans-octaprenyl diphosphate + 4-hydroxybenzoate = 4-hydroxy-3-(all-trans-octaprenyl)benzoate + diphosphate. It participates in cofactor biosynthesis; ubiquinone biosynthesis. Catalyzes the prenylation of para-hydroxybenzoate (PHB) with an all-trans polyprenyl group. Mediates the second step in the final reaction sequence of ubiquinone-8 (UQ-8) biosynthesis, which is the condensation of the polyisoprenoid side chain with PHB, generating the first membrane-bound Q intermediate 3-octaprenyl-4-hydroxybenzoate. The polypeptide is 4-hydroxybenzoate octaprenyltransferase (Blochmanniella pennsylvanica (strain BPEN)).